A 954-amino-acid polypeptide reads, in one-letter code: METGSEEEKWEKLDAEFDHFVVDMKPFVLKLPHRSERQRCALWIRKLCEPSGTGAGLMGRKNRNLYAKLLLHMLRRGILEGPFTHRPEPGTLKTLPSYMSIYFDEPNQAQPKDSSPEKLPDWVRGELQTGEQRLSDSWQCSSGEDNTLVLAASDAHREQYTGKLRMRSHSVSPTYREDKQHITSKICEVHSKTSPISLDDSDIEVRLNSWNLGIENPRYLRQKPLPVSLMTPKGSLRKASSLHDDHFLSRMHEKELDMKTKMMEAKFSEEKLKLQQKHDAEVQKILERKNNELEELKILYKKKQTETEETIRKLEKKVQILIRDCQVIRETKENQITELKKICEQSTESLNNDWEKKLHNAVAEMEKDKFELQKHHTETIQELLEDTNVRLSKMEADYVVQMQSTNHMIKELEGRVQQLMGEAENSNLQRQKLTQEKLELERCYQITCNELQELKTRRNILHKEKEHLVNDYEQNVKLLKTKYDSDINLLRQEHALSTSKTSGVIEELEQNICQLKQQVQESELQRKQQVKDQENKFHMEKNHLKHTYEKKVHELQSELDKEKEDAQRKIHKFEEALKEKEEQLSRVTEVQRLQAQQADAALEEFKRQVEVNSEKVYGEMKEQMEKVEADLTRSKSLREKQSKEFLWQLEDAKQRYEQQIVELKLEHEQEKTHLLQQHSAEKDSLVRDHDREIENLEKQLRAANMEHENQIQESKKRDAQVIADMEAQVHKLREELISVNSQRKQQLIELGLLREEEKQRAAKDHETAVKKLKAESERVKMELKKTHAAETEMTLEKANSRLKQIEKEYTQKLAKSSQIIAELQTTISSLKEESSRQQLAAERRLQDVIQKFEDEKQQLIRDNDQAIKALQDELETRSHQVRSAEKKLHHKELEAQEQIMYIRQEYETKFKGLMPASLRQELEDTISSLKSQVNFLQKRASILQEELTTYQSRR.

The stretch at 276 to 954 forms a coiled coil; that stretch reads QKHDAEVQKI…EELTTYQSRR (679 aa).

Its subcellular location is the cytoplasm. It localises to the cytoskeleton. It is found in the microtubule organizing center. The protein localises to the centrosome. This is Centrosomal protein of 112 kDa (Cep112) from Mus musculus (Mouse).